The sequence spans 215 residues: Protein HP-25 homolog 2 (215 aa).

An N-terminal signal peptide occupies residues 1–30 (MPGRGGQSLSMVCVDVWILALSVLSVMADA). A disordered region spans residues 35 to 79 (VTESCDSQGPPGLPGPPGLPGPPGPPGPPGPPGLRGPTGIPGDIE). Residues 43–76 (GPPGLPGPPGLPGPPGPPGPPGPPGLRGPTGIPG) enclose the Collagen-like domain. Residues 45–68 (PGLPGPPGLPGPPGPPGPPGPPGL) show a composition bias toward pro residues. A C1q domain is found at 82-215 (LSPPKSAFAV…GYLLYGNYPG (134 aa)).

The protein resides in the secreted. This Bos taurus (Bovine) protein is Protein HP-25 homolog 2.